We begin with the raw amino-acid sequence, 266 residues long: Putative carbamate hydrolase RutD (266 aa).

Belongs to the AB hydrolase superfamily. Hydrolase RutD family.

The enzyme catalyses carbamate + 2 H(+) = NH4(+) + CO2. In terms of biological role, involved in pyrimidine catabolism. May facilitate the hydrolysis of carbamate, a reaction that can also occur spontaneously. The chain is Putative carbamate hydrolase RutD from Escherichia coli O45:K1 (strain S88 / ExPEC).